The primary structure comprises 1039 residues: L-arabinokinase (1039 aa).

Residues 662-678 form a helical membrane-spanning segment; sequence AAYVAGTILVLMIELGV. 693–703 serves as a coordination point for ATP; sequence PEGKGVSSSAA. The active-site Proton acceptor is Asp745.

It belongs to the GHMP kinase family.

It localises to the membrane. It catalyses the reaction L-arabinose + ATP = beta-L-arabinose 1-phosphate + ADP + H(+). Its function is as follows. Arabinose kinase. Involved in the salvage pathway which converts free L-arabinose to UDP-L-arabinose. May play a role in arabinose transport. This chain is L-arabinokinase (ARA1), found in Arabidopsis thaliana (Mouse-ear cress).